A 136-amino-acid chain; its full sequence is uncharacterized protein (136 aa).

A disordered region spans residues M1 to R51. The segment covering Q37–S46 has biased composition (basic and acidic residues).

This is an uncharacterized protein from Homo sapiens (Human).